We begin with the raw amino-acid sequence, 139 residues long: Interleukin-5 (139 aa).

The signal sequence occupies residues 1–19 (MMKILVCLPLLTLYAGCVY). Asn-48, Asn-77, and Asn-91 each carry an N-linked (GlcNAc...) asparagine glycan.

Belongs to the IL-5 family. Homodimer; disulfide-linked. Interacts with IL5RA. Interacts with CSF2RB.

It is found in the secreted. Homodimeric cytokine expressed predominantly by T-lymphocytes and NK cells that plays an important role in the survival, differentiation, and chemotaxis of eosinophils. Also acts on activated and resting B-cells to induce immunoglobulin production, growth, and differentiation. Mechanistically, exerts its biological effects through a receptor composed of IL5RA subunit and the cytokine receptor common subunit beta/CSF2RB. Binding to the receptor leads to activation of various kinases including LYN, SYK and JAK2 and thereby propagates signals through the RAS-MAPK and JAK-STAT5 pathways respectively. The polypeptide is Interleukin-5 (IL5) (Notamacropus eugenii (Tammar wallaby)).